The chain runs to 502 residues: Lysine--tRNA ligase (502 aa).

Mg(2+)-binding residues include glutamate 398 and glutamate 405.

It belongs to the class-II aminoacyl-tRNA synthetase family. Homodimer. Mg(2+) is required as a cofactor.

It is found in the cytoplasm. It carries out the reaction tRNA(Lys) + L-lysine + ATP = L-lysyl-tRNA(Lys) + AMP + diphosphate. This Thermotoga maritima (strain ATCC 43589 / DSM 3109 / JCM 10099 / NBRC 100826 / MSB8) protein is Lysine--tRNA ligase (lysS).